Here is a 564-residue protein sequence, read N- to C-terminus: Dihydroxy-acid dehydratase (564 aa).

Cys51 contributes to the [2Fe-2S] cluster binding site. Residue Asp83 coordinates Mg(2+). Cys124 is a [2Fe-2S] cluster binding site. Mg(2+) contacts are provided by Asp125 and Lys126. Residue Lys126 is modified to N6-carboxylysine. Cys196 is a binding site for [2Fe-2S] cluster. Glu448 is a Mg(2+) binding site. Ser474 functions as the Proton acceptor in the catalytic mechanism.

The protein belongs to the IlvD/Edd family. As to quaternary structure, homodimer. The cofactor is [2Fe-2S] cluster. Mg(2+) serves as cofactor.

The enzyme catalyses (2R)-2,3-dihydroxy-3-methylbutanoate = 3-methyl-2-oxobutanoate + H2O. It carries out the reaction (2R,3R)-2,3-dihydroxy-3-methylpentanoate = (S)-3-methyl-2-oxopentanoate + H2O. Its pathway is amino-acid biosynthesis; L-isoleucine biosynthesis; L-isoleucine from 2-oxobutanoate: step 3/4. It participates in amino-acid biosynthesis; L-valine biosynthesis; L-valine from pyruvate: step 3/4. Functions in the biosynthesis of branched-chain amino acids. Catalyzes the dehydration of (2R,3R)-2,3-dihydroxy-3-methylpentanoate (2,3-dihydroxy-3-methylvalerate) into 2-oxo-3-methylpentanoate (2-oxo-3-methylvalerate) and of (2R)-2,3-dihydroxy-3-methylbutanoate (2,3-dihydroxyisovalerate) into 2-oxo-3-methylbutanoate (2-oxoisovalerate), the penultimate precursor to L-isoleucine and L-valine, respectively. This chain is Dihydroxy-acid dehydratase, found in Polynucleobacter asymbioticus (strain DSM 18221 / CIP 109841 / QLW-P1DMWA-1) (Polynucleobacter necessarius subsp. asymbioticus).